The following is a 90-amino-acid chain: Small ribosomal subunit protein uS19 (90 aa).

This sequence belongs to the universal ribosomal protein uS19 family.

Functionally, protein S19 forms a complex with S13 that binds strongly to the 16S ribosomal RNA. The chain is Small ribosomal subunit protein uS19 from Rhizorhabdus wittichii (strain DSM 6014 / CCUG 31198 / JCM 15750 / NBRC 105917 / EY 4224 / RW1) (Sphingomonas wittichii).